Here is a 55-residue protein sequence, read N- to C-terminus: ATP synthase protein 8 (55 aa).

The helical transmembrane segment at 7 to 28 threads the bilayer; that stretch reads ISWFFNFLLAWFFLFIVVTILL.

This sequence belongs to the ATPase protein 8 family. As to quaternary structure, F-type ATPases have 2 components, CF(1) - the catalytic core - and CF(0) - the membrane proton channel.

The protein localises to the mitochondrion membrane. In terms of biological role, mitochondrial membrane ATP synthase (F(1)F(0) ATP synthase or Complex V) produces ATP from ADP in the presence of a proton gradient across the membrane which is generated by electron transport complexes of the respiratory chain. F-type ATPases consist of two structural domains, F(1) - containing the extramembraneous catalytic core and F(0) - containing the membrane proton channel, linked together by a central stalk and a peripheral stalk. During catalysis, ATP synthesis in the catalytic domain of F(1) is coupled via a rotary mechanism of the central stalk subunits to proton translocation. Part of the complex F(0) domain. Minor subunit located with subunit a in the membrane. This Pisaster ochraceus (Ochre sea star) protein is ATP synthase protein 8 (MT-ATP8).